A 387-amino-acid chain; its full sequence is MAPNLSPNPSNSLDAFAAEKLAGLEAAALRRRLAVTARGPEAAAERGGRRLVSFSCNDYLGLAHDPRVIAAASDALRRYGAGAGASRLVTGNSPPLAALEERLARHKGKEAALVFGSGYLANLGIAPALVGQGDLILIDDLGHSCLFAGARMSGALTLRFTHNDVAQLRALLAEQRGAARRALILTERVFSMDGDRAPLAEILALAGAYDAWTLVDDAHGLGVVEPGQRAPLEMGTLSKTLGSYGGYLCASRAVIDLLTSRARSLVYTTGLPPASAAAALKALEIVEAEPEHAARPLMLARRFTARLGLPEATSPIVPVLVGAAESALALSAALEARGFLVVAIRPPTVAPGTARLRVAFSAAHDAAQVDALAEALAELAPDSLRAA.

Substrate-binding residues include Arg31 and Arg38. Residue 118-119 coordinates pyridoxal 5'-phosphate; sequence GY. His143 contributes to the substrate binding site. Pyridoxal 5'-phosphate contacts are provided by residues Ser191, 216 to 219, and 236 to 239; these read DDAH and TLSK. Residue Lys239 is modified to N6-(pyridoxal phosphate)lysine. Thr348 lines the substrate pocket.

This sequence belongs to the class-II pyridoxal-phosphate-dependent aminotransferase family. BioF subfamily. In terms of assembly, homodimer. It depends on pyridoxal 5'-phosphate as a cofactor.

It carries out the reaction 6-carboxyhexanoyl-[ACP] + L-alanine + H(+) = (8S)-8-amino-7-oxononanoate + holo-[ACP] + CO2. Its pathway is cofactor biosynthesis; biotin biosynthesis. Its function is as follows. Catalyzes the decarboxylative condensation of pimeloyl-[acyl-carrier protein] and L-alanine to produce 8-amino-7-oxononanoate (AON), [acyl-carrier protein], and carbon dioxide. In Methylorubrum populi (strain ATCC BAA-705 / NCIMB 13946 / BJ001) (Methylobacterium populi), this protein is 8-amino-7-oxononanoate synthase.